We begin with the raw amino-acid sequence, 373 residues long: MVEEICHICNDKSTGKHYGAISCDGCKGFFRRSIRKRYHYQCRFEQNCDVTKNKRNACRACRLQKCVKAGMKSNAIQNERDAIGKRKKTTGAEKEDLIDQLVAAETLCQQLRSSVIKNTSSLAPYDCGKVKWNYEDARAATLDDIGKSIHQQLVLFIEWAKSLPQFSFLAQADQAALLKGGAASIIVLGVAYRSICLTVENTICLANDTLLPKEHATQVGDINCVVGRIIDEIVNPMRRLNMDLIEYVALKAILFFNPVVREINDQSPVENARYAFLRSLQRRCTDKALENMEDESMDCRSGKLLLLLPSLQAIAQQLVEDVQLARLFGLVNVDSLMEELILNDMKPSDPQILQTSLASPVNSSVKAEVELEE.

Positions 3 to 78 (EEICHICNDK…AGMKSNAIQN (76 aa)) form a DNA-binding region, nuclear receptor. 2 NR C4-type zinc fingers span residues 6 to 26 (CHICNDKSTGKHYGAISCDGC) and 42 to 66 (CRFEQNCDVTKNKRNACRACRLQKC). The region spanning 93–344 (EKEDLIDQLV…SLMEELILND (252 aa)) is the NR LBD domain.

Belongs to the nuclear hormone receptor family. Interacts with R-SMAD daf-8. In terms of tissue distribution, expressed in the ASI neurons, hypodermis, and in tail neurons.

The protein resides in the nucleus. Functionally, orphan nuclear receptor which, in cooperation with R-SMAD daf-8, modulates the Insulin/IGF-1-like signaling (IIS) pathway, perhaps by regulating expression of the potassium channel exp-2, which in turn modulates the secretion of insulin-like peptide daf-28. This Caenorhabditis elegans protein is Nuclear hormone receptor family member nhr-69 (nhr-69).